We begin with the raw amino-acid sequence, 1657 residues long: Alsin (1657 aa).

RCC1 repeat units follow at residues 59–108 (DGEV…AVTD), 109–167 (NGVA…ALSI), and 169–218 (REIW…ALVQ). The interval 432–480 (TGAQAGSSAIGPEGLKDSREEQVKQESMQGKKSSSLVDIREEETEGGSR) is disordered. Basic and acidic residues predominate over residues 445–455 (GLKDSREEQVK). Polar residues predominate over residues 456-467 (QESMQGKKSSSL). A phosphoserine mark is found at S465, S466, S483, and S492. T510 carries the phosphothreonine modification. RCC1 repeat units lie at residues 525–576 (RTEV…ALTA) and 578–627 (SQVY…FLVD). Position 533 is an N6-acetyllysine (K533). The DH domain maps to 690–885 (GYIASLHELA…ECLALHLGRK (196 aa)). Residues 901-1007 (GKMTDSLRKP…RAISQAVDQA (107 aa)) enclose the PH domain. MORN repeat units follow at residues 1049–1071 (YDGR…DGKM), 1072–1094 (YSGM…NKAM), 1100–1122 (YVGH…SGEV), 1123–1145 (FEGC…KLTS), 1151–1173 (FIGQ…TRGE), 1175–1197 (YMGM…FGLY), 1198–1220 (YEGN…DDTI), and 1221–1244 (YEGE…NGDY). Position 1335 is a phosphoserine (S1335). One can recognise a VPS9 domain in the interval 1513-1657 (KQPDIALLGF…YYQIQREKLN (145 aa)).

Forms a heteromeric complex with ALS2CL. Interacts with ALS2CL.

May act as a GTPase regulator. Controls survival and growth of spinal motoneurons. The sequence is that of Alsin (ALS2) from Homo sapiens (Human).